A 193-amino-acid chain; its full sequence is Apoptosis-associated speck-like protein containing a CARD (193 aa).

One can recognise a Pyrin domain in the interval methionine 1 to glutamate 91. Residues lysine 55 and lysine 172 each participate in a glycyl lysine isopeptide (Lys-Gly) (interchain with G-Cter in ubiquitin) cross-link. Positions serine 105–serine 193 constitute a CARD domain. Serine 193 bears the Phosphoserine mark.

Self-associates; enforced oligomerization induces apoptosis, NF-kappa-B regulation and interleukin-1 beta secretion. Homooligomers can form disk-like particles of approximately 12 nm diameter and approximately 1 nm height. Component of several inflammasomes containing one pattern recognition receptor/sensor, such as NLRP2, NLRP3, NLRP6, NLRC4, AIM2, MEFV or NOD2, and probably NLRC4 or NLRP12. Major component of the ASC pyroptosome, a 1-2 um supramolecular assembly (one per macrophage cell) which consists of oligomerized PYCARD dimers and CASP1. Interacts with CASP1 (precursor form); the interaction induces activation of CASP1 leading to the processing of interleukin-1 beta; PYCARD competes with RIPK2 for binding to CASP1. Interacts with NLRP3; the interaction requires the homooligomerization of NLRP3. Interacts with NLRP2, NLRC4, MEFV, CARD16, AIM2, NOD2, RIGI, RIPK2, PYDC1, PYDC2, NLRP10, CHUK, IKBKB and BAX. Interacts with CASP8. Component of the AIM2 PANoptosome complex, a multiprotein complex that drives inflammatory cell death (PANoptosis). Phosphorylated. Post-translationally, 'Lys-63'-linked polyubiquitination by TRAF3 is critical for speck formation and inflammasome activation. 'Lys-63'-linked deubiquitinated by USP50; a crucial step for NLRP3-mediated inflammasome activation. 'Lys-63'-linked polyubiquitination by PELI1 is also critical for speck formation and inflammasome activation. Deubiquitinated by USP3 that cleaves 'Lys-48'-linked ubiquitin chains and strengthens its stability by blocking proteasomal degradation. Expressed in small intestine, colon, thymus, spleen, brain, heart, skeletal muscle, kidney, lung and liver.

The protein resides in the cytoplasm. The protein localises to the inflammasome. It is found in the endoplasmic reticulum. Its subcellular location is the mitochondrion. It localises to the nucleus. Functionally, functions as a key mediator in apoptosis and inflammation. Promotes caspase-mediated apoptosis involving predominantly caspase-8 and also caspase-9 in a probable cell type-specific manner. Involved in activation of the mitochondrial apoptotic pathway, promotes caspase-8-dependent proteolytic maturation of BID independently of FADD in certain cell types and also mediates mitochondrial translocation of BAX and activates BAX-dependent apoptosis coupled to activation of caspase-9, -2 and -3. Involved in innate immune response by acting as an integral adapter in the assembly of various inflammasomes (NLRP2, NLRP3, NLRP6 and AIM2) which recruit and activate caspase-1 leading to processing and secretion of pro-inflammatory cytokines. Caspase-1-dependent inflammation leads to macrophage pyroptosis, a form of cell death. The function as activating adapter in different types of inflammasomes is mediated by the pyrin and CARD domains and their homotypic interactions. Clustered PYCARD nucleates the formation of caspase-1 filaments through the interaction of their respective CARD domains, acting as a platform for of caspase-1 polymerization. In the NLRC4 inflammasomes seems not be required but facilitates the processing of procaspase-1. In cooperation with NOD2 involved in an inflammasome activated by bacterial muramyl dipeptide leading to caspase-1 activation. May be involved in RIGI-triggered pro-inflammatory responses and inflammasome activation. In collaboration with AIM2 which detects cytosolic double-stranded DNA may also be involved in a caspase-1-independent cell death that involves caspase-8. In adaptive immunity may be involved in maturation of dendritic cells to stimulate T-cell immunity and in cytoskeletal rearrangements coupled to chemotaxis and antigen uptake may be involved in post-transcriptional regulation of the guanine nucleotide exchange factor DOCK2; the latter function is proposed to involve the nuclear form. Also involved in transcriptional activation of cytokines and chemokines independent of the inflammasome; this function may involve AP-1, NF-kappa-B, MAPK and caspase-8 signaling pathways. For regulation of NF-kappa-B activating and inhibiting functions have been reported. Modulates NF-kappa-B induction at the level of the IKK complex by inhibiting kinase activity of CHUK and IKBK. Proposed to compete with RIPK2 for association with CASP1 thereby down-regulating CASP1-mediated RIPK2-dependent NF-kappa-B activation and activating interleukin-1 beta processing. Modulates host resistance to DNA virus infection, probably by inducing the cleavage of and inactivating CGAS in presence of cytoplasmic double-stranded DNA. The chain is Apoptosis-associated speck-like protein containing a CARD (Pycard) from Mus musculus (Mouse).